A 202-amino-acid polypeptide reads, in one-letter code: MLKFSMEFCYPQPDVKTLIVGTLGPKETSSEQTLNYLITQWQAEQISVTSHLFDTFTELKEALLQDRVDLALVPHAYERVNDFYMEPSLKLGFVFTYPTPIYGLAKRKNEELVWENCTLVTHPAPFPLLPYLLPGYPHQKNIKVEFVNSTSAAAIQVKQGLADLAITNENALKENDLEFIAEYGKIEMSWSIFHKKGTVHRE.

This sequence belongs to the prephenate decarboxylase family.

The enzyme catalyses prephenate + H(+) = 3-[(4R)-4-hydroxycyclohexa-1,5-dien-1-yl]-2-oxopropanoate + CO2. In vivo, involved in the biosynthesis of 2-carboxy-6-hydroxyoctahydroindole (Choi) present in the nonribosomal glycopeptides aeruginoside 126A and B. AerD is an unusual prephenate decarboxylase that avoids the typical aromatization of the cyclohexadienol ring of prephenate. AerD catalyzes the protonation at C8 followed by decarboxylation to produce the dihydro-4-hydroxyphenylpyruvate regioisomer A258 (H2HPP A258)(3-(4-hydroxycyclohexa- 1,5-dienyl)-2-oxopropanoic acid), which is able to undergo a nonenzymatic isomerization to produce dihydro-4-hydroxyphenylpyruvate regioisomer A295 (H2HPP A295)(3-(4-hydroxycyclohex-2-enylidene)-2-oxopropanoic acid). The protein is Prephenate decarboxylase of Planktothrix agardhii (strain NIVA-CYA 126/8).